Consider the following 184-residue polypeptide: MSPEKYLNFFKETADKKFQWLKEELSKIRTGRPNPKLFDNLLVESYGDRMPMVALAQIAVNPPREIVIKPFDVKNNINAIYSEIQRANLGVQPVIDGDKIRINFPPMTQESRLESIKQAKKVVEQIHQELRSVRRDTLQMIKKDDHKDEDFEEFLKEEVEKVNKQYIAQLETIQKQKEKELLVV.

This sequence belongs to the RRF family.

It localises to the cytoplasm. Its function is as follows. Responsible for the release of ribosomes from messenger RNA at the termination of protein biosynthesis. May increase the efficiency of translation by recycling ribosomes from one round of translation to another. This is Ribosome-recycling factor from Mycoplasma pneumoniae (strain ATCC 29342 / M129 / Subtype 1) (Mycoplasmoides pneumoniae).